The following is a 129-amino-acid chain: NADH-quinone oxidoreductase subunit A (129 aa).

Helical transmembrane passes span 14 to 34 (LAIHVALSAGIVAAIIGVAAV), 67 to 87 (FLIAALFVIFDMEAAILFAWA), and 97 to 117 (GLIEAAIFIGVLLLALVYLWI).

It belongs to the complex I subunit 3 family. In terms of assembly, NDH-1 is composed of 14 different subunits. Subunits NuoA, H, J, K, L, M, N constitute the membrane sector of the complex.

The protein localises to the cell inner membrane. It catalyses the reaction a quinone + NADH + 5 H(+)(in) = a quinol + NAD(+) + 4 H(+)(out). In terms of biological role, NDH-1 shuttles electrons from NADH, via FMN and iron-sulfur (Fe-S) centers, to quinones in the respiratory chain. The immediate electron acceptor for the enzyme in this species is believed to be ubiquinone. Couples the redox reaction to proton translocation (for every two electrons transferred, four hydrogen ions are translocated across the cytoplasmic membrane), and thus conserves the redox energy in a proton gradient. In Rhodopseudomonas palustris (strain BisB18), this protein is NADH-quinone oxidoreductase subunit A.